A 174-amino-acid polypeptide reads, in one-letter code: RNA pyrophosphohydrolase (174 aa).

A Nudix hydrolase domain is found at 6 to 149; sequence GFRANVGIII…KRDVYRKVMK (144 aa). The short motif at 38-59 is the Nudix box element; it reads GGVDDGETAEEAMYRELYEEVG.

The protein belongs to the Nudix hydrolase family. RppH subfamily. It depends on a divalent metal cation as a cofactor.

Its function is as follows. Accelerates the degradation of transcripts by removing pyrophosphate from the 5'-end of triphosphorylated RNA, leading to a more labile monophosphorylated state that can stimulate subsequent ribonuclease cleavage. This chain is RNA pyrophosphohydrolase, found in Shewanella sp. (strain MR-7).